A 350-amino-acid chain; its full sequence is S-adenosylmethionine:tRNA ribosyltransferase-isomerase (350 aa).

This sequence belongs to the QueA family. In terms of assembly, monomer.

The protein localises to the cytoplasm. The catalysed reaction is 7-aminomethyl-7-carbaguanosine(34) in tRNA + S-adenosyl-L-methionine = epoxyqueuosine(34) in tRNA + adenine + L-methionine + 2 H(+). It functions in the pathway tRNA modification; tRNA-queuosine biosynthesis. In terms of biological role, transfers and isomerizes the ribose moiety from AdoMet to the 7-aminomethyl group of 7-deazaguanine (preQ1-tRNA) to give epoxyqueuosine (oQ-tRNA). This is S-adenosylmethionine:tRNA ribosyltransferase-isomerase from Bacillus mycoides (strain KBAB4) (Bacillus weihenstephanensis).